Consider the following 618-residue polypeptide: tRNA endonuclease vms-1 (618 aa).

A C2H2-type zinc finger spans residues 59–85; that stretch reads DQCTTCNCPVDFGDRAVLLEHYQSLFH. The VLRF1 domain occupies 170–311; it reads RPFDCAIFLW…SDCWQRLQQV (142 aa). Residue Gln-213 is part of the active site. ANK repeat units follow at residues 437–466 and 470–496; these read NRST…CDSS and GAGL…VKNE. Positions 502 to 539 are disordered; sequence ARTHIPEPKKKVELTEEQEREQAERKKEKKARQKEKEK. Basic and acidic residues predominate over residues 505 to 515; the sequence is HIPEPKKKVEL. The stretch at 510 to 557 forms a coiled coil; that stretch reads KKKVELTEEQEREQAERKKEKKARQKEKEKLKKEIAKRDVEEMEERQK.

The protein belongs to the ANKZF1/VMS1 family. As to expression, in larval stages and in adults, expressed in intestinal cells, specific neurons in the head and the tail, and in the ventral nerve cord.

It is found in the cytoplasm. Its subcellular location is the mitochondrion. Functionally, endonuclease that cleaves polypeptidyl-tRNAs downstream of the ribosome-associated quality control (RQC) pathway to release incompletely synthesized polypeptides for degradation. The RQC pathway disassembles aberrantly stalled translation complexes to recycle or degrade the constituent parts. Dispensable for viability and growth but is required for protection against oxidative stress and for wild-type life span. The protein is tRNA endonuclease vms-1 (vms-1) of Caenorhabditis elegans.